The chain runs to 368 residues: MSDNQVKIKKQTIDPTLTLEDVKKQLIDKGKKEGHLSHEEIAEKLQNFEMDSDQMDDFFDQLNDNDITLVNEKDSSDTDDKINPNDLSAPPGVKINDPVRMYLKEIGRVNLLSAQEEIELAKRIEQGDEIAKSRLAEANLRLVVSIAKRYVGRGMLFLDLIQEGNMGLIKAVEKFDFSKGFKFSTYATWWIRQAITRAIADQARTIRIPVHMVETINKLIRVQRQLLQDLGRDPAPEEIGEEMDLPPEKVREILKIAQEPVSLETPIGEEDDSHLGDFIEDQEAQSPSDHAAYELLKEQLEDVLDTLTDREENVLRLRFGLDDGRTRTLEEVGKVFGVTRERIRQIEAKALRKLRHPSRSKRLKDFMD.

Over residues 71-83 the composition is skewed to basic and acidic residues; that stretch reads NEKDSSDTDDKIN. The tract at residues 71 to 90 is disordered; the sequence is NEKDSSDTDDKINPNDLSAP. Positions 135–205 are sigma-70 factor domain-2; the sequence is LAEANLRLVV…TRAIADQART (71 aa). Residues 159-162 carry the Interaction with polymerase core subunit RpoC motif; that stretch reads DLIQ. Residues 214–290 are sigma-70 factor domain-3; it reads ETINKLIRVQ…DQEAQSPSDH (77 aa). The segment at 303-356 is sigma-70 factor domain-4; sequence VLDTLTDREENVLRLRFGLDDGRTRTLEEVGKVFGVTRERIRQIEAKALRKLRH. Residues 329 to 348 constitute a DNA-binding region (H-T-H motif); sequence LEEVGKVFGVTRERIRQIEA.

It belongs to the sigma-70 factor family. RpoD/SigA subfamily. In terms of assembly, interacts transiently with the RNA polymerase catalytic core.

The protein resides in the cytoplasm. Its function is as follows. Sigma factors are initiation factors that promote the attachment of RNA polymerase to specific initiation sites and are then released. This sigma factor is the primary sigma factor during exponential growth. This is RNA polymerase sigma factor SigA from Staphylococcus epidermidis (strain ATCC 35984 / DSM 28319 / BCRC 17069 / CCUG 31568 / BM 3577 / RP62A).